Here is a 537-residue protein sequence, read N- to C-terminus: Caspase recruitment domain-containing protein 8 (537 aa).

Basic and acidic residues predominate over residues Met1–Gly23. 2 disordered regions span residues Met1–Ile28 and Gly113–Ile133. The interval Phe161 to Phe296 is ZU5. Positions Phe161–Pro446 constitute an FIIND domain. The segment at Ser297–Pro446 is UPA. In terms of domain architecture, CARD spans Pro446–Asn536.

Interacts with DPP9; leading to inhibit activation of the inflammasome. DPP9 acts via formation of a ternary complex, composed of a DPP9 homodimer, one full-length CARD8 protein, and one cleaved C-terminus of CARD8 (Caspase recruitment domain-containing protein 8, C-terminus). Interacts with DPP8; leading to inhibit activation of the inflammasome, probably via formation of a ternary complex with DPP8. Interacts with NLRP3. Interacts with IKBKG/NEMO. Interacts with DRAL. Binds to caspase-1 (CASP1), CARD16/pseudo-ICE and CARD18/ICEBERG. Interacts with NLRP2 (via NACHT domain). In terms of assembly, interacts with the C-terminal part of CARD8 (Caspase recruitment domain-containing protein 8, C-terminus) in absence of pathogens and other damage-associated signals. As to quaternary structure, interacts with the N-terminal part of CARD8 (Caspase recruitment domain-containing protein 8, N-terminus) in absence of pathogens and other damage-associated signals. Homomultimer; forms the CARD8 inflammasome polymeric complex, a filament composed of homopolymers of this form in response to pathogens and other damage-associated signals. The CARD8 inflammasome polymeric complex directly recruits pro-caspase-1 (proCASP1) independently of PYCARD/ASC. Interacts (via CARD domain) with CASP1 (via CARD domain); leading to CASP1 activation. Undergoes autocatalytic processing within the FIIND domain to generate the N-terminal and C-terminal parts, which are associated non-covalently in absence of pathogens and other damage-associated signals. In terms of processing, ubiquitinated by the N-end rule pathway in response to pathogens and other damage-associated signals, leading to its degradation by the proteasome and subsequent release of the cleaved C-terminal part of the protein (Caspase recruitment domain-containing protein 8, C-terminus), which polymerizes and forms the CARD8 inflammasome. Post-translationally, (Microbial infection) Proteolytic cleavage by HIV-1 protease in the disordered region and within the ZU5 region of the FIIND domain promotes ubiquitination of the N-terminal part by the N-end rule pathway and degradation by the proteasome, releasing the cleaved C-terminal part of the protein (Caspase recruitment domain-containing protein 8, C-terminus), which polymerizes and forms the CARD8 inflammasome. Undergoes less autocatalytic processing within the FIIND domain compared to isoform 5. In terms of tissue distribution, high expression in lung, ovary, testis and placenta. Lower expression in heart, kidney and liver. Also expressed in spleen, lymph node and bone marrow.

Its subcellular location is the cytoplasm. The protein resides in the nucleus. It localises to the inflammasome. Its activity is regulated as follows. CARD8 inflammasome is activated by HIV-1 protease activity: HIV-1 protease cleaves CARD8, promoting ubiquitination and degradation of the N-terminal part, releasing the cleaved C-terminal part of the protein (Caspase recruitment domain-containing protein 8, C-terminus), which polymerizes and forms the CARD8 inflammasome. CARD8 inflammasome is inhibited by DPP8 and DPP9, which sequester the C-terminal fragment of CARD8 (Caspase recruitment domain-containing protein 8, C-terminus) in a ternary complex, thereby preventing CARD8 oligomerization and activation. CARD8 inflammasome is activated by Val-boroPro (Talabostat, PT-100), an inhibitor of dipeptidyl peptidases DPP8 and DPP9. Val-boroPro relieves inhibition of DPP8 and/or DPP9 by inducing the proteasome-mediated destruction of the N-terminal part of CARD8, releasing its C-terminal part from autoinhibition. Indirectly activated by the pseudodipeptide CQ31. CQ31 directly inactivates the peptidases PEPD and XPNPEP1, leading to an accumulation of dipeptides that weaky inhibit DDP8 and DPP9, relieving DPP8- and/or DPP9-mediated inhibition of CARD8. Its function is as follows. Inflammasome sensor, which mediates inflammasome activation in response to various pathogen-associated signals, leading to subsequent pyroptosis of CD4(+) T-cells and macrophages. Inflammasomes are supramolecular complexes that assemble in the cytosol in response to pathogens and other damage-associated signals and play critical roles in innate immunity and inflammation. Acts as a recognition receptor (PRR): recognizes specific pathogens and other damage-associated signals, such as HIV-1 protease activity or Val-boroPro inhibitor, and mediates CARD8 inflammasome activation. In response to pathogen-associated signals, the N-terminal part of CARD8 is degraded by the proteasome, releasing the cleaved C-terminal part of the protein (Caspase recruitment domain-containing protein 8, C-terminus), which polymerizes to initiate the formation of the inflammasome complex: the CARD8 inflammasome directly recruits pro-caspase-1 (proCASP1) independently of PYCARD/ASC and promotes caspase-1 (CASP1) activation, which subsequently cleaves and activates inflammatory cytokines IL1B and IL18 and gasdermin-D (GSDMD), leading to pyroptosis. Ability to sense HIV-1 protease activity leads to the clearance of latent HIV-1 in patient CD4(+) T-cells after viral reactivation; in contrast, HIV-1 can evade CARD8-sensing when its protease remains inactive in infected cells prior to viral budding. Also acts as a negative regulator of the NLRP3 inflammasome. May also act as an inhibitor of NF-kappa-B activation. Constitutes the precursor of the CARD8 inflammasome, which mediates autoproteolytic processing within the FIIND domain to generate the N-terminal and C-terminal parts, which are associated non-covalently in absence of pathogens and other damage-associated signals. In terms of biological role, regulatory part that prevents formation of the CARD8 inflammasome: in absence of pathogens and other damage-associated signals, interacts with the C-terminal part of CARD8 (Caspase recruitment domain-containing protein 8, C-terminus), preventing activation of the CARD8 inflammasome. In response to pathogen-associated signals, this part is ubiquitinated by the N-end rule pathway and degraded by the proteasome, releasing the cleaved C-terminal part of the protein, which polymerizes and forms the CARD8 inflammasome. Functionally, constitutes the active part of the CARD8 inflammasome. In absence of pathogens and other damage-associated signals, interacts with the N-terminal part of CARD8 (Caspase recruitment domain-containing protein 8, N-terminus), preventing activation of the CARD8 inflammasome. In response to pathogen-associated signals, the N-terminal part of CARD8 is degraded by the proteasome, releasing this form, which polymerizes to form the CARD8 inflammasome complex: the CARD8 inflammasome complex then directly recruits pro-caspase-1 (proCASP1) and promotes caspase-1 (CASP1) activation, leading to gasdermin-D (GSDMD) cleavage and subsequent pyroptosis. The polypeptide is Caspase recruitment domain-containing protein 8 (Homo sapiens (Human)).